A 240-amino-acid chain; its full sequence is Lactate utilization protein C (240 aa).

It belongs to the LutC/YkgG family.

In terms of biological role, is involved in L-lactate degradation and allows cells to grow with lactate as the sole carbon source. This is Lactate utilization protein C from Bacillus pumilus (strain SAFR-032).